A 923-amino-acid polypeptide reads, in one-letter code: Inorganic phosphate transporter PHO87 (923 aa).

One can recognise an SPX domain in the interval 1-334 (MRFSHFLKYN…HMNTRQELIE (334 aa)). The Extracellular portion of the chain corresponds to 1–461 (MRFSHFLKYN…KLFFGKRAMK (461 aa)). 2 disordered regions span residues 40–74 (ETPT…SSSK) and 86–107 (FGSK…IDGN). Residues 95-104 (KRGDSDEKAI) show a composition bias toward basic and acidic residues. Residue Lys-102 forms a Glycyl lysine isopeptide (Lys-Gly) (interchain with G-Cter in ubiquitin) linkage. Asn-162, Asn-202, and Asn-274 each carry an N-linked (GlcNAc...) asparagine glycan. A helical membrane pass occupies residues 462–482 (IGFIIIVTGVLLGVKTFNDPV). Residues 483–493 (EHRCMALVECC) are Cytoplasmic-facing. The chain crosses the membrane as a helical span at residues 494–514 (AFLWASEAIPLHITGLLVPLL). The Extracellular portion of the chain corresponds to 515–537 (TVLFRVLKDDDGKVMGAAAASTE). A helical transmembrane segment spans residues 538–558 (ILGTMWSSTIMILLAGFTLGE). Topologically, residues 559–583 (ALSQYNVAKVLASWLLALAGTKPRN) are cytoplasmic. The chain crosses the membrane as a helical span at residues 584-604 (VLLMAMSVVFFLSMWISNVAS). At 605 to 627 (PVLTYSLLTPLLDPLDYTSPFAK) the chain is on the extracellular side. Residues 628 to 648 (ALVMGVALSADIGGMASPISS) form a helical membrane-spanning segment. The Cytoplasmic portion of the chain corresponds to 649-667 (PQNIISMQYLKPYGIGWGQ). Residues 668 to 688 (FFAVALPTGILSMLCSWALMI) form a helical membrane-spanning segment. The Extracellular portion of the chain corresponds to 689–707 (LTFKIGKTKLEKFKPIRTR). Residues 708 to 728 (FTIKQYFIIIVTIATILLWCV) traverse the membrane as a helical segment. Residues 729–735 (ESQIESA) are Cytoplasmic-facing. Residues 736–756 (FGSSGEIAVIPIVLFFGTGLL) form a helical membrane-spanning segment. Over 757 to 767 (STKDFNTFPWS) the chain is Extracellular. The helical transmembrane segment at 768–788 (IVVLAMGGIALGKAVSSSGLL) threads the bilayer. The Cytoplasmic portion of the chain corresponds to 789 to 802 (VTIARALQKKIQND). The chain crosses the membrane as a helical span at residues 803–823 (GVFAILCIFGILMLVVGTFVS). At 824-849 (HTVSAIIIIPLVQEVGDKLSDPKAAP) the chain is on the extracellular side. Residues 850–870 (ILVFGCALLASCGMGLASSGF) form a helical membrane-spanning segment. Over 871 to 898 (PNVTAISMTDKKGNRWLTVGAFISRGVP) the chain is Cytoplasmic. A helical transmembrane segment spans residues 899–919 (ASLLAFVCVITLGYGISSSVL). At 920–923 (KGST) the chain is on the extracellular side.

Belongs to the CitM (TC 2.A.11) transporter family.

The protein localises to the membrane. Functionally, involved in the uptake of inorganic phosphate. This is Inorganic phosphate transporter PHO87 (PHO87) from Saccharomyces cerevisiae (strain ATCC 204508 / S288c) (Baker's yeast).